The following is a 301-amino-acid chain: tRNA dimethylallyltransferase (301 aa).

8–15 contacts ATP; it reads GATGTGKS. 10 to 15 contributes to the substrate binding site; sequence TGTGKS. The interval 33–36 is interaction with substrate tRNA; the sequence is DSMQ.

Belongs to the IPP transferase family. As to quaternary structure, monomer. It depends on Mg(2+) as a cofactor.

The catalysed reaction is adenosine(37) in tRNA + dimethylallyl diphosphate = N(6)-dimethylallyladenosine(37) in tRNA + diphosphate. Its function is as follows. Catalyzes the transfer of a dimethylallyl group onto the adenine at position 37 in tRNAs that read codons beginning with uridine, leading to the formation of N6-(dimethylallyl)adenosine (i(6)A). The chain is tRNA dimethylallyltransferase from Tropheryma whipplei (strain Twist) (Whipple's bacillus).